The primary structure comprises 110 residues: MDQFECINVEEAHQKMHQGKAVLVDIRDPQSYAMGHTPGAFHLTNDTLGTFMRDNDFETPVMVMCYHGNSSKGAAQYLLQQGYDAVYSVDGGFDAWHRHFPAEVEHAFGG.

A Rhodanese domain is found at 17–105 (HQGKAVLVDI…WHRHFPAEVE (89 aa)). Cysteine 65 serves as the catalytic Cysteine persulfide intermediate.

Belongs to the GlpE family.

It localises to the cytoplasm. It carries out the reaction thiosulfate + hydrogen cyanide = thiocyanate + sulfite + 2 H(+). It catalyses the reaction thiosulfate + [thioredoxin]-dithiol = [thioredoxin]-disulfide + hydrogen sulfide + sulfite + 2 H(+). Transferase that catalyzes the transfer of sulfur from thiosulfate to thiophilic acceptors such as cyanide or dithiols. May function in a CysM-independent thiosulfate assimilation pathway by catalyzing the conversion of thiosulfate to sulfite, which can then be used for L-cysteine biosynthesis. This chain is Thiosulfate sulfurtransferase GlpE, found in Enterobacter sp. (strain 638).